Here is a 269-residue protein sequence, read N- to C-terminus: 3-methyl-2-oxobutanoate hydroxymethyltransferase (269 aa).

The Mg(2+) site is built by Asp-52 and Asp-91. Residues 52–53, Asp-91, and Lys-121 contribute to the 3-methyl-2-oxobutanoate site; that span reads DT. Glu-123 contributes to the Mg(2+) binding site. The active-site Proton acceptor is the Glu-186.

The protein belongs to the PanB family. As to quaternary structure, homodecamer; pentamer of dimers. Mg(2+) serves as cofactor.

The protein resides in the cytoplasm. The enzyme catalyses 3-methyl-2-oxobutanoate + (6R)-5,10-methylene-5,6,7,8-tetrahydrofolate + H2O = 2-dehydropantoate + (6S)-5,6,7,8-tetrahydrofolate. It functions in the pathway cofactor biosynthesis; (R)-pantothenate biosynthesis; (R)-pantoate from 3-methyl-2-oxobutanoate: step 1/2. Its function is as follows. Catalyzes the reversible reaction in which hydroxymethyl group from 5,10-methylenetetrahydrofolate is transferred onto alpha-ketoisovalerate to form ketopantoate. In Rhodopirellula baltica (strain DSM 10527 / NCIMB 13988 / SH1), this protein is 3-methyl-2-oxobutanoate hydroxymethyltransferase.